A 185-amino-acid polypeptide reads, in one-letter code: Guanosine deaminase (185 aa).

Residues 28–142 (DSDHKFLTQA…AAIAIGFDDF (115 aa)) form the CMP/dCMP-type deaminase domain. Residue histidine 80 participates in Zn(2+) binding. Residue glutamate 82 is the Proton donor of the active site. Residues cysteine 110 and cysteine 113 each contribute to the Zn(2+) site.

It belongs to the cytidine and deoxycytidylate deaminase family. Expressed in roots, leaves, flowers and siliques.

Its subcellular location is the cytoplasm. The protein resides in the nucleus. The enzyme catalyses guanosine + H2O + H(+) = xanthosine + NH4(+). Its function is as follows. Catalyzes the hydrolytic deamination of guanosine, producing xanthosine and ammonia. Deaminates exclusively guanosine and 2'-deoxyguanosine but no other aminated purines, pyrimidines, or pterines. Deamination of guanosine by GSDA is the only source of xanthosine production in Arabidopsis. The polypeptide is Guanosine deaminase (Arabidopsis thaliana (Mouse-ear cress)).